The sequence spans 186 residues: MNVRDVAQRTEPKMKKTIEAFQHEIASIRTGKATTALLDRVKVEAYGQQMPLKQVGNVGVMDVHTLMVQVWDKSMVSATERAIRDANLGLNPAADGQSIRVSIPPLTEERRKEFVKLTKKFGEDSKVSLRNLRRDMIHEIEKLEKEKAISEDDKNKGKKEADEMLHKFEKQLNDLIVLKEKEIMEV.

This sequence belongs to the RRF family.

It localises to the cytoplasm. Responsible for the release of ribosomes from messenger RNA at the termination of protein biosynthesis. May increase the efficiency of translation by recycling ribosomes from one round of translation to another. The polypeptide is Ribosome-recycling factor (Chlorobium phaeobacteroides (strain DSM 266 / SMG 266 / 2430)).